The following is a 295-amino-acid chain: Gamma-glutamyl-L-1-hydroxyisopropylamide hydrolase (295 aa).

One can recognise a Glutamine amidotransferase type-1 domain in the interval 5–221; the sequence is RILICDGNTE…LRESARSLVE (217 aa). Catalysis depends on cysteine 104, which acts as the Nucleophile. Catalysis depends on residues histidine 200 and glutamate 202.

It carries out the reaction gamma-L-glutamyl-L-alaninol + H2O = L-alaninol + L-glutamate. In terms of biological role, involved in the degradation of isopropylamine, which is a constituent of the herbicides atrazine. Catalyzes the hydrolysis of gamma-glutamyl-L-alaninol (GALO) to L-alaninol and L-glutamate. It can also uses gamma-glutamyl-isopropylamide, gamma-glutamyl-ethylamide, L-glutamine, and gamma-glutamyl-p-nitroanilide. The sequence is that of Gamma-glutamyl-L-1-hydroxyisopropylamide hydrolase (ipuF) from Pseudomonas sp.